We begin with the raw amino-acid sequence, 294 residues long: Elongation factor Ts (294 aa).

The segment at T80–V83 is involved in Mg(2+) ion dislocation from EF-Tu.

It belongs to the EF-Ts family.

The protein localises to the cytoplasm. Associates with the EF-Tu.GDP complex and induces the exchange of GDP to GTP. It remains bound to the aminoacyl-tRNA.EF-Tu.GTP complex up to the GTP hydrolysis stage on the ribosome. In Listeria innocua serovar 6a (strain ATCC BAA-680 / CLIP 11262), this protein is Elongation factor Ts.